A 199-amino-acid chain; its full sequence is 3-isopropylmalate dehydratase small subunit (199 aa).

This sequence belongs to the LeuD family. LeuD type 1 subfamily. Heterodimer of LeuC and LeuD.

The enzyme catalyses (2R,3S)-3-isopropylmalate = (2S)-2-isopropylmalate. It participates in amino-acid biosynthesis; L-leucine biosynthesis; L-leucine from 3-methyl-2-oxobutanoate: step 2/4. In terms of biological role, catalyzes the isomerization between 2-isopropylmalate and 3-isopropylmalate, via the formation of 2-isopropylmaleate. The polypeptide is 3-isopropylmalate dehydratase small subunit (Aeromonas salmonicida (strain A449)).